The primary structure comprises 279 residues: HTH-type transcriptional regulator BhcR (279 aa).

Residues 1–13 (MSVQIRKRGRPRG) are compositionally biased toward basic residues. The tract at residues 1–21 (MSVQIRKRGRPRGRAGGLGAE) is disordered. An HTH iclR-type domain is found at 26-87 (IRALDRALDI…SQTQAWHVGP (62 aa)). The segment at residues 47-66 (LTEIAQRLDMAPSTVHRVLV) is a DNA-binding region (H-T-H motif). Residues 102–271 (LVERARPLLR…ARELSFGMAP (170 aa)) enclose the IclR-ED domain.

Functionally, transcriptional regulator of the bhc gene cluster involved in glycolate and glyoxylate assimilation via the beta-hydroxyaspartate cycle (BHAC). Glyoxylate negatively affects the interaction of BhcR with the promoter region of the bhc gene cluster. This chain is HTH-type transcriptional regulator BhcR, found in Paracoccus denitrificans (strain Pd 1222).